Reading from the N-terminus, the 1299-residue chain is DNA-directed RNA polymerase subunit beta' (1299 aa).

Zn(2+) is bound by residues C60, C62, C75, and C78. Mg(2+)-binding residues include D535, D537, and D539. 4 residues coordinate Zn(2+): C877, C954, C961, and C964.

It belongs to the RNA polymerase beta' chain family. In terms of assembly, the RNAP catalytic core consists of 2 alpha, 1 beta, 1 beta' and 1 omega subunit. When a sigma factor is associated with the core the holoenzyme is formed, which can initiate transcription. Requires Mg(2+) as cofactor. It depends on Zn(2+) as a cofactor.

It catalyses the reaction RNA(n) + a ribonucleoside 5'-triphosphate = RNA(n+1) + diphosphate. In terms of biological role, DNA-dependent RNA polymerase catalyzes the transcription of DNA into RNA using the four ribonucleoside triphosphates as substrates. This is DNA-directed RNA polymerase subunit beta' from Renibacterium salmoninarum (strain ATCC 33209 / DSM 20767 / JCM 11484 / NBRC 15589 / NCIMB 2235).